An 872-amino-acid chain; its full sequence is Alanine--tRNA ligase (872 aa).

Residues His-567, His-571, Cys-669, and His-673 each contribute to the Zn(2+) site.

The protein belongs to the class-II aminoacyl-tRNA synthetase family. Requires Zn(2+) as cofactor.

Its subcellular location is the cytoplasm. It carries out the reaction tRNA(Ala) + L-alanine + ATP = L-alanyl-tRNA(Ala) + AMP + diphosphate. Catalyzes the attachment of alanine to tRNA(Ala) in a two-step reaction: alanine is first activated by ATP to form Ala-AMP and then transferred to the acceptor end of tRNA(Ala). Also edits incorrectly charged Ser-tRNA(Ala) and Gly-tRNA(Ala) via its editing domain. This chain is Alanine--tRNA ligase, found in Streptococcus agalactiae serotype V (strain ATCC BAA-611 / 2603 V/R).